The sequence spans 181 residues: Adenylate kinase (181 aa).

Residue G10–T15 coordinates ATP. The interval S30 to V59 is NMP. AMP-binding positions include T31, R36, K57–V59, G85–R88, and Q92. Residues A126–D132 form an LID region. R127 is a binding site for ATP. AMP-binding residues include R129 and R140. G166 provides a ligand contact to ATP.

This sequence belongs to the adenylate kinase family. Monomer.

Its subcellular location is the cytoplasm. The catalysed reaction is AMP + ATP = 2 ADP. It functions in the pathway purine metabolism; AMP biosynthesis via salvage pathway; AMP from ADP: step 1/1. Its function is as follows. Catalyzes the reversible transfer of the terminal phosphate group between ATP and AMP. Plays an important role in cellular energy homeostasis and in adenine nucleotide metabolism. The sequence is that of Adenylate kinase from Corynebacterium diphtheriae (strain ATCC 700971 / NCTC 13129 / Biotype gravis).